Consider the following 350-residue polypeptide: DNA-directed RNA polymerase subunit alpha (350 aa).

The alpha N-terminal domain (alpha-NTD) stretch occupies residues 1 to 226 (MLISQRPTLS…ELFGLARELN (226 aa)). An alpha C-terminal domain (alpha-CTD) region spans residues 241-350 (ADQAAHFALP…NQDYAETEQL (110 aa)). Residues 328–350 (GTWNSDAGYDLEDNQDYAETEQL) form a disordered region. The span at 336–350 (YDLEDNQDYAETEQL) shows a compositional bias: acidic residues.

The protein belongs to the RNA polymerase alpha chain family. In terms of assembly, homodimer. The RNAP catalytic core consists of 2 alpha, 1 beta, 1 beta' and 1 omega subunit. When a sigma factor is associated with the core the holoenzyme is formed, which can initiate transcription.

It catalyses the reaction RNA(n) + a ribonucleoside 5'-triphosphate = RNA(n+1) + diphosphate. Its function is as follows. DNA-dependent RNA polymerase catalyzes the transcription of DNA into RNA using the four ribonucleoside triphosphates as substrates. This Mycolicibacterium vanbaalenii (strain DSM 7251 / JCM 13017 / BCRC 16820 / KCTC 9966 / NRRL B-24157 / PYR-1) (Mycobacterium vanbaalenii) protein is DNA-directed RNA polymerase subunit alpha.